The chain runs to 391 residues: Na(+)/H(+) antiporter NhaA 1 (391 aa).

11 consecutive transmembrane segments (helical) span residues alanine 25–leucine 45, valine 56–leucine 76, alanine 98–isoleucine 118, glycine 128–glycine 148, valine 157–phenylalanine 177, alanine 180–methionine 200, leucine 208–histidine 228, valine 264–isoleucine 284, valine 297–isoleucine 317, glycine 335–phenylalanine 355, and glutamate 364–leucine 384.

It belongs to the NhaA Na(+)/H(+) (TC 2.A.33) antiporter family.

The protein resides in the cell inner membrane. It catalyses the reaction Na(+)(in) + 2 H(+)(out) = Na(+)(out) + 2 H(+)(in). Functionally, na(+)/H(+) antiporter that extrudes sodium in exchange for external protons. The protein is Na(+)/H(+) antiporter NhaA 1 of Pseudomonas syringae pv. syringae (strain B728a).